The primary structure comprises 467 residues: uncharacterized protein (467 aa).

Lys290 carries the post-translational modification N6-(pyridoxal phosphate)lysine.

This sequence belongs to the class-III pyridoxal-phosphate-dependent aminotransferase family. Pyridoxal 5'-phosphate is required as a cofactor.

This is an uncharacterized protein from Sinorhizobium fredii (strain NBRC 101917 / NGR234).